The chain runs to 288 residues: Nucleotide-binding protein AHA_3920 (288 aa).

8–15 (GRSGSGKT) lines the ATP pocket. Residue 56-59 (DVRN) coordinates GTP.

It belongs to the RapZ-like family.

In terms of biological role, displays ATPase and GTPase activities. This Aeromonas hydrophila subsp. hydrophila (strain ATCC 7966 / DSM 30187 / BCRC 13018 / CCUG 14551 / JCM 1027 / KCTC 2358 / NCIMB 9240 / NCTC 8049) protein is Nucleotide-binding protein AHA_3920.